The primary structure comprises 171 residues: SWR1 complex subunit 6 (171 aa).

The tract at residues 63 to 87 (DEDDDLGYLQKKQHKGSKRKTRQAK) is disordered. Over residues 73–85 (KKQHKGSKRKTRQ) the composition is skewed to basic residues. Residues Cys134, Cys137, Cys145, Cys148, Cys153, Cys157, His161, and Cys166 each coordinate Zn(2+). Residues 134 to 166 (CSVCGYIAGYNCCLCGMRFCSIRCQNIHKDTRC) form an HIT-type zinc finger.

It belongs to the ZNHIT1 family. In terms of assembly, homodimer. Component of the SWR1 chromatin-remodeling complex composed of at least ARP6/ESD1/SUF3, PIE1, SWC6, SWC2 and H2AZs (HTA8, HTA9, HTA11). Interacts directly with ARP6, PIE1 and SWC2. Interacts with FLX and SUF4, two component of the transcription activator complex FRI-C, and with ASHH2 and TAF14. As to expression, expressed in root, lateral root primordia, shoot apex, leaves, stems, inflorescences, flowers, axillary buds, developing siliques and premature seeds.

It localises to the nucleus speckle. The protein resides in the nucleus. Its function is as follows. Component of the SWR1 complex which mediates the ATP-dependent exchange of histone H2A for the H2A variant H2A.F/Z leading to transcriptional regulation of selected genes (e.g. FLC) by chromatin remodeling. Coodinates SWR1-C, FRI-C (FLC transcription activator complex), histone methyltransferase and general transcription factors. Represses flowering by positively regulating FLC and MAF4. Binds to the promoter region of FLC chromatin. The sequence is that of SWR1 complex subunit 6 (SWC6) from Arabidopsis thaliana (Mouse-ear cress).